The sequence spans 127 residues: Large ribosomal subunit protein bL20 (127 aa).

This sequence belongs to the bacterial ribosomal protein bL20 family.

In terms of biological role, binds directly to 23S ribosomal RNA and is necessary for the in vitro assembly process of the 50S ribosomal subunit. It is not involved in the protein synthesizing functions of that subunit. The protein is Large ribosomal subunit protein bL20 of Bifidobacterium adolescentis (strain ATCC 15703 / DSM 20083 / NCTC 11814 / E194a).